We begin with the raw amino-acid sequence, 750 residues long: Phosphate transporter PHO1 homolog 7 (750 aa).

The SPX domain maps to 1–298 (MKFGKDFVRQ…SRSAAKPYME (298 aa)). At 1-350 (MKFGKDFVRQ…KVKKEKHRIT (350 aa)) the chain is on the cytoplasmic side. A helical membrane pass occupies residues 351–371 (FSTGFFVGCTVSLVVALVMFI). Topologically, residues 372-391 (HARNIMGAVGHKVYMETMFP) are extracellular. Residues 392–412 (LYSLFAFVVLHMIMYASNIYF) traverse the membrane as a helical segment. Over 413 to 435 (WKRYRVNYPFIFGFKEGTELGYR) the chain is Cytoplasmic. The chain crosses the membrane as a helical span at residues 436–456 (HVLLLSFGLGTLALCAVLINL). The Extracellular segment spans residues 457–472 (DMEMDPNTNDYKTMTE). A helical transmembrane segment spans residues 473–493 (LLPMFILALVVAILFCPFNIF). Topologically, residues 494-622 (YRSSRVFFLM…YSFNRGNIWK (129 aa)) are cytoplasmic. Residues 557 to 750 (RSSDVYSTFY…NYNEEEDRDS (194 aa)) enclose the EXS domain. Residues 623-643 (ISAWVFSALATFYGTYWDIVF) traverse the membrane as a helical segment. At 644-666 (DWGLLHRPSKHLLREKLLVPHKA) the chain is on the extracellular side. The chain crosses the membrane as a helical span at residues 667–687 (VYYVAIVLNIVLRMAWLQTVL). The Cytoplasmic portion of the chain corresponds to 688 to 750 (DFNLSFLHRE…NYNEEEDRDS (63 aa)).

This sequence belongs to the SYG1 (TC 2.A.94) family. As to expression, expressed in root tips, vascular cylinders of roots and filaments, leaf hydathodes, stem, receptacle and stigma apex.

The protein localises to the cell membrane. May transport inorganic phosphate (Pi). The chain is Phosphate transporter PHO1 homolog 7 (PHO1-H7) from Arabidopsis thaliana (Mouse-ear cress).